Reading from the N-terminus, the 285-residue chain is Probable endonuclease 4 (285 aa).

The Zn(2+) site is built by His-69, His-109, Glu-145, Asp-179, His-182, His-216, Asp-229, His-231, and Glu-261.

It belongs to the AP endonuclease 2 family. Zn(2+) is required as a cofactor.

It catalyses the reaction Endonucleolytic cleavage to 5'-phosphooligonucleotide end-products.. Its function is as follows. Endonuclease IV plays a role in DNA repair. It cleaves phosphodiester bonds at apurinic or apyrimidinic (AP) sites, generating a 3'-hydroxyl group and a 5'-terminal sugar phosphate. The polypeptide is Probable endonuclease 4 (Shigella boydii serotype 18 (strain CDC 3083-94 / BS512)).